A 695-amino-acid chain; its full sequence is MGINTKSFVMGKHTITLETGRIARQAHGAVLVSMDDTQVLVTVVGSKKMHPGQDFFPLSVDYIEKTYAAGKIPGGFLKREARPSEKETLTSRLIDRPIRPLFPNGFMNEVQVLITVISANSEVDPDIISMLGVSAALSISGIPFNGPIGSARVGYSNGKYTLNPTYTELVDSDLDMVVAGTDKAILMVESEASELSEKIILDAIIYAHEQYQVAITNIAEFVTQVGVQKWDWEAPATNEVLLSNIKSQFGKQINEAYKIKEKLNRHVKVGEIKTAAIEALVNEDKNGNSIDEVSKYFNKVEKSTVRERILNNDPRIDGRDNETVRELKIETGVLENTHGSALFTRGETQALVVTTLGSKREAQLIEKLESSERQNDYFLLHYNFPPYCVGEIGRVGTTKRREIGHGRLVRRGIAACLPSIEEFPYTVRVVSEITESNGSSSMASICGASLSLMDAGVPIKAPVAGIAMGLVKEGDRFTILTDILGDEDHLGDMDFKVAGTSRGINALQMDIKIQGITREIMEIALKQAKEARLNILGQMNQVICEPNTSNKNTPKTAVIKIQTDKIRDLIGKGGETIKGIISTSSASVDVDDNGNVNIFSNDQKSFDTAMQMVKDVTTTPKIGKVYTGKVVKIVDFGAFINIKPNQDGLLHISEIAHERVDKVENHLKEGDEIDVKVLSLDRGRIKLSRKVLLEK.

Residues Asp488 and Asp494 each coordinate Mg(2+). In terms of domain architecture, KH spans 554-613 (PKTAVIKIQTDKIRDLIGKGGETIKGIISTSSASVDVDDNGNVNIFSNDQKSFDTAMQMV). In terms of domain architecture, S1 motif spans 623–690 (GKVYTGKVVK…DRGRIKLSRK (68 aa)).

The protein belongs to the polyribonucleotide nucleotidyltransferase family. In terms of assembly, component of the RNA degradosome, which is a multiprotein complex involved in RNA processing and mRNA degradation. Mg(2+) is required as a cofactor.

The protein localises to the cytoplasm. It catalyses the reaction RNA(n+1) + phosphate = RNA(n) + a ribonucleoside 5'-diphosphate. In terms of biological role, involved in mRNA degradation. Catalyzes the phosphorolysis of single-stranded polyribonucleotides processively in the 3'- to 5'-direction. The polypeptide is Polyribonucleotide nucleotidyltransferase (Ruthia magnifica subsp. Calyptogena magnifica).